A 231-amino-acid chain; its full sequence is 5'-methylthioadenosine/S-adenosylhomocysteine nucleosidase (231 aa).

Glu12 functions as the Proton acceptor in the catalytic mechanism. Residues Gly78, Met153, and 174–175 (ME) contribute to the substrate site. The active-site Proton donor is the Asp198.

It belongs to the PNP/UDP phosphorylase family. MtnN subfamily.

It catalyses the reaction S-adenosyl-L-homocysteine + H2O = S-(5-deoxy-D-ribos-5-yl)-L-homocysteine + adenine. It carries out the reaction S-methyl-5'-thioadenosine + H2O = 5-(methylsulfanyl)-D-ribose + adenine. The enzyme catalyses 5'-deoxyadenosine + H2O = 5-deoxy-D-ribose + adenine. It functions in the pathway amino-acid biosynthesis; L-methionine biosynthesis via salvage pathway; S-methyl-5-thio-alpha-D-ribose 1-phosphate from S-methyl-5'-thioadenosine (hydrolase route): step 1/2. In terms of biological role, catalyzes the irreversible cleavage of the glycosidic bond in both 5'-methylthioadenosine (MTA) and S-adenosylhomocysteine (SAH/AdoHcy) to adenine and the corresponding thioribose, 5'-methylthioribose and S-ribosylhomocysteine, respectively. Also cleaves 5'-deoxyadenosine, a toxic by-product of radical S-adenosylmethionine (SAM) enzymes, into 5-deoxyribose and adenine. The sequence is that of 5'-methylthioadenosine/S-adenosylhomocysteine nucleosidase from Bacillus pumilus (strain SAFR-032).